Reading from the N-terminus, the 475-residue chain is Fez family zinc finger protein 1 (475 aa).

An Engrailed homology 1 repressor motif is present at residues 28 to 43 (PLAFSIERIMARTPEP). C2H2-type zinc fingers lie at residues 260–282 (FTCE…MPVH), 288–310 (FVCK…KIIH), 316–338 (HKCN…TRIH), 344–366 (FVCE…KLTH), 372–394 (FKCN…MHTH), and 400–423 (FTCP…RKLH). A disordered region spans residues 428-475 (GLARTPAGEPGTEPPPPLPQQPPMTLPPLQPPLPTPGPLQPGLHQGHQ). Over residues 439 to 466 (TEPPPPLPQQPPMTLPPLQPPLPTPGPL) the composition is skewed to pro residues.

This sequence belongs to the krueppel C2H2-type zinc-finger protein family. Expressed in brain. Little or no expression in other tissues. Overexpressed specifically in gastric cancers. A 2- to 20-fold increase is found in over 50% of gastric cancer tissues.

The protein resides in the nucleus. Functionally, transcription repressor. Involved in the axonal projection and proper termination of olfactory sensory neurons (OSN). Plays a role in rostro-caudal patterning of the diencephalon and in prethalamic formation. Expression is required in OSN to cell-autonomously regulate OSN axon projections. Regulates non-cell-autonomously the layer formation of the olfactory bulb development and the interneurons. May be required for correct rostral migration of the interneuron progenitors. The chain is Fez family zinc finger protein 1 (FEZF1) from Homo sapiens (Human).